We begin with the raw amino-acid sequence, 66 residues long: DNA gyrase inhibitor YacG (66 aa).

Zn(2+) contacts are provided by Cys-9, Cys-12, Cys-28, and Cys-32. Residues 45 to 66 form a disordered region; sequence HKIAGSEESEDELYSGDLEPRH.

The protein belongs to the DNA gyrase inhibitor YacG family. In terms of assembly, interacts with GyrB. It depends on Zn(2+) as a cofactor.

Its function is as follows. Inhibits all the catalytic activities of DNA gyrase by preventing its interaction with DNA. Acts by binding directly to the C-terminal domain of GyrB, which probably disrupts DNA binding by the gyrase. The protein is DNA gyrase inhibitor YacG of Pseudomonas putida (strain ATCC 47054 / DSM 6125 / CFBP 8728 / NCIMB 11950 / KT2440).